We begin with the raw amino-acid sequence, 289 residues long: MKKLSFQQIILILQNYWQDYGCAILQPYDAHVGAGTFHPATVLRCLGDKPWFIAYVQPSRRPGDSRYGMHPNRMQHYYQFQVILKPSPDNIQDLYLKSLESLDLDLKTHDIRFVEDDWESPTLGASGLGWEIWCDGMEVSQFTYMQQIGGIECYPVACEITYGLERLALYIQGIDEVKELDWNGQIGEKALKYGEVDFEAERQFSKYNLEFADSEMLLRRFKDSVEQCERLVKVNLPMPAYDECLKASHYFNQLNALGVISVTERASYVLRVRDLARICCIKWLELSSE.

It belongs to the class-II aminoacyl-tRNA synthetase family. In terms of assembly, tetramer of two alpha and two beta subunits.

The protein resides in the cytoplasm. The enzyme catalyses tRNA(Gly) + glycine + ATP = glycyl-tRNA(Gly) + AMP + diphosphate. The chain is Glycine--tRNA ligase alpha subunit (glyQ) from Rickettsia prowazekii (strain Madrid E).